The following is a 179-amino-acid chain: ADP-ribosylation factor-like protein 5A (179 aa).

The N-myristoyl glycine moiety is linked to residue glycine 2. Residues 23-30 (GLDNAGKT), 66-70 (DIGGQ), 125-128 (NKQD), and alanine 159 contribute to the GTP site.

The protein belongs to the small GTPase superfamily. Arf family.

Functionally, lacks ADP-ribosylation enhancing activity. This chain is ADP-ribosylation factor-like protein 5A (ARL5A), found in Bos taurus (Bovine).